The chain runs to 458 residues: BTB/POZ domain-containing protein At5g41330 (458 aa).

Residues 11–72 (NVVSINVGGR…LRTGNLPARS (62 aa)) enclose the BTB domain. WD repeat units follow at residues 259–305 (DSAI…MVWE), 360–399 (LNERRGVGSKIESYGNHVFCSSKGSGIELWSEVITGLVGN), and 421–458 (SGENKITGLAFGGNRMFVTRKDQQSVQVWQSPSRGISI).

The protein operates within protein modification; protein ubiquitination. May act as a substrate-specific adapter of an E3 ubiquitin-protein ligase complex (CUL3-RBX1-BTB) which mediates the ubiquitination and subsequent proteasomal degradation of target proteins. The sequence is that of BTB/POZ domain-containing protein At5g41330 from Arabidopsis thaliana (Mouse-ear cress).